The primary structure comprises 431 residues: Citrate synthase (431 aa).

Catalysis depends on residues H306 and D364.

This sequence belongs to the citrate synthase family.

The catalysed reaction is oxaloacetate + acetyl-CoA + H2O = citrate + CoA + H(+). Its pathway is carbohydrate metabolism; tricarboxylic acid cycle; isocitrate from oxaloacetate: step 1/2. The sequence is that of Citrate synthase (gltA) from Bartonella henselae (strain ATCC 49882 / DSM 28221 / CCUG 30454 / Houston 1) (Rochalimaea henselae).